Here is a 243-residue protein sequence, read N- to C-terminus: Adenosine 5'-phosphosulfate reductase (243 aa).

The [4Fe-4S] cluster site is built by Cys126, Cys127, Cys209, and Cys212. Cys235 (nucleophile; cysteine thiosulfonate intermediate) is an active-site residue.

It belongs to the PAPS reductase family. CysH subfamily. [4Fe-4S] cluster is required as a cofactor.

It localises to the cytoplasm. The enzyme catalyses [thioredoxin]-disulfide + sulfite + AMP + 2 H(+) = adenosine 5'-phosphosulfate + [thioredoxin]-dithiol. Its pathway is sulfur metabolism; hydrogen sulfide biosynthesis; sulfite from sulfate. Its function is as follows. Catalyzes the formation of sulfite from adenosine 5'-phosphosulfate (APS) using thioredoxin as an electron donor. The polypeptide is Adenosine 5'-phosphosulfate reductase (Staphylococcus epidermidis (strain ATCC 35984 / DSM 28319 / BCRC 17069 / CCUG 31568 / BM 3577 / RP62A)).